The primary structure comprises 116 residues: Large ribosomal subunit protein bL19 (116 aa).

This sequence belongs to the bacterial ribosomal protein bL19 family.

Functionally, this protein is located at the 30S-50S ribosomal subunit interface and may play a role in the structure and function of the aminoacyl-tRNA binding site. The chain is Large ribosomal subunit protein bL19 from Actinobacillus succinogenes (strain ATCC 55618 / DSM 22257 / CCUG 43843 / 130Z).